We begin with the raw amino-acid sequence, 323 residues long: Thymidine kinase (323 aa).

An ATP-binding site is contributed by 11–18; it reads GPHGLGKT. E36 serves as the catalytic Proton acceptor. Positions 54 and 78 each coordinate substrate. Position 169 (R169) interacts with ATP. A substrate-binding site is contributed by R175.

It belongs to the herpesviridae thymidine kinase family. Homodimer.

It carries out the reaction thymidine + ATP = dTMP + ADP + H(+). Catalyzes the transfer of the gamma-phospho group of ATP to thymidine to generate dTMP in the salvage pathway of pyrimidine synthesis. The dTMP serves as a substrate for DNA polymerase during viral DNA replication. Allows the virus to be reactivated and to grow in non-proliferative cells lacking a high concentration of phosphorylated nucleic acid precursors. The chain is Thymidine kinase from Bos taurus (Bovine).